The chain runs to 193 residues: Large ribosomal subunit protein uL18 (193 aa).

This sequence belongs to the universal ribosomal protein uL18 family. Part of the 50S ribosomal subunit. Contacts the 5S and 23S rRNAs.

In terms of biological role, this is one of the proteins that bind and probably mediate the attachment of the 5S RNA into the large ribosomal subunit, where it forms part of the central protuberance. The chain is Large ribosomal subunit protein uL18 from Methanococcus maripaludis (strain C5 / ATCC BAA-1333).